A 314-amino-acid chain; its full sequence is MIFDHNDKRPPIVVLCGPTAAGKTALAVRLAGELPVEVVSADSRQVYRHMDIGTAKPTSEELAAVPHHLIDVVDPDENFTAGNFCRLGRQALNDILGRNRLPIVVGGTGLYIQALLHGLIDVPDGDSELRATLLRAEQLHGEGTLYQRLQIVDPVLAKRLPPNDLVRIVRGLEVYELCNRRLSDLQAEHAGQKSPYRVLTLGLTMSREALYERINHRVWRMLEDGLAQEVEFLLKRGYAAECKAMQTIGYRELVQHVLGNLSMDEAVRLIQRDTRRYAKRQLTWFNKVNSIIWLDSFGEFAKVLKLIDSFIYAA.

17–24 (GPTAAGKT) serves as a coordination point for ATP. Residue 19–24 (TAAGKT) participates in substrate binding. The tract at residues 42–45 (DSRQ) is interaction with substrate tRNA.

This sequence belongs to the IPP transferase family. As to quaternary structure, monomer. It depends on Mg(2+) as a cofactor.

It catalyses the reaction adenosine(37) in tRNA + dimethylallyl diphosphate = N(6)-dimethylallyladenosine(37) in tRNA + diphosphate. Catalyzes the transfer of a dimethylallyl group onto the adenine at position 37 in tRNAs that read codons beginning with uridine, leading to the formation of N6-(dimethylallyl)adenosine (i(6)A). The polypeptide is tRNA dimethylallyltransferase 1 (Syntrophotalea carbinolica (strain DSM 2380 / NBRC 103641 / GraBd1) (Pelobacter carbinolicus)).